Here is a 440-residue protein sequence, read N- to C-terminus: COP9 signalosome complex subunit 4 (440 aa).

In terms of domain architecture, PCI spans serine 216–glutamate 386.

This sequence belongs to the CSN4 family. As to quaternary structure, component of the COP9 signalosome (CSN) complex.

Its subcellular location is the cytoplasm. The protein resides in the nucleus. Functionally, component of the COP9 signalosome (CSN) complex that acts as an regulator of the ubiquitin (Ubl) conjugation pathway by mediating the deneddylation of the cullin subunit of SCF-type E3 ubiquitin-protein ligase complexes. The CSN complex is involved in the regulation of the circadian clock through its control of the stability of the SCF(FWD1) complex. The sequence is that of COP9 signalosome complex subunit 4 (csn-4) from Neurospora crassa (strain ATCC 24698 / 74-OR23-1A / CBS 708.71 / DSM 1257 / FGSC 987).